The following is a 756-amino-acid chain: 1-phosphatidylinositol 4,5-bisphosphate phosphodiesterase delta-1 (756 aa).

A PH domain is found at A21 to H130. Residues K30–K57 are substrate binding. EF-hand domains are found at residues K140–Q175 and V176–R211. Ca(2+)-binding residues include D153, N155, D157, K159, E164, D189, S191, T193, S195, and E200. An O-linked (GlcNAc) serine glycan is attached at S191. An O-linked (GlcNAc) threonine glycan is attached at T193. Positions Q296–K440 constitute a PI-PLC X-box domain. Residue H311 is part of the active site. Ca(2+)-binding residues include N312, E341, and D343. The active site involves H356. Position 390 (E390) interacts with Ca(2+). K438 and K440 together coordinate substrate. T457 carries the phosphothreonine modification. Position 460 is a phosphoserine (S460). Residues L492–R609 enclose the PI-PLC Y-box domain. The substrate site is built by S522 and R549. Residues R609–S737 enclose the C2 domain. Residues I651, D653, N677, D706, Y707, and D708 each coordinate Ca(2+).

In terms of assembly, interacts with TGM2. The cofactor is Ca(2+).

It catalyses the reaction a 1,2-diacyl-sn-glycero-3-phospho-(1D-myo-inositol-4,5-bisphosphate) + H2O = 1D-myo-inositol 1,4,5-trisphosphate + a 1,2-diacyl-sn-glycerol + H(+). The enzyme catalyses a 1,2-diacyl-sn-glycero-3-phospho-(1D-myo-inositol) + H2O = 1D-myo-inositol 1-phosphate + a 1,2-diacyl-sn-glycerol + H(+). The production of the second messenger molecules diacylglycerol (DAG) and inositol 1,4,5-trisphosphate (IP3) is mediated by activated phosphatidylinositol-specific phospholipase C enzymes. Essential for trophoblast and placental development. Binds phosphatidylinositol 4,5-bisphosphate. The sequence is that of 1-phosphatidylinositol 4,5-bisphosphate phosphodiesterase delta-1 from Rattus norvegicus (Rat).